The primary structure comprises 146 residues: Transcriptional regulator AdcR (146 aa).

In terms of domain architecture, HTH marR-type spans 1–143; that stretch reads MRQLAKDINA…IQRFLTALVG (143 aa). Glu-24, Cys-30, Glu-41, and His-42 together coordinate Zn(2+). Residues 54–77 constitute a DNA-binding region (H-T-H motif); that stretch reads NSELARRLNVSQAAVTKAIKSLVK. Positions 107, 108, and 112 each coordinate Zn(2+).

As to quaternary structure, homodimer.

With respect to regulation, zinc acts as a coregulator and is required for DNA-binding activity. Functionally, zinc-responsive regulator that acts both as a repressor and as an activator by regulating directly the promoters of its target genes. In the presence of zinc, directly represses the expression of the adcRCBA operon, of genes coding for a group of surface antigen zinc-binding pneumococcal histidine triad proteins (PhtA, PhtB, PhtD and PhtE), and of adcAII. Can also activate expression of adh. The chain is Transcriptional regulator AdcR (adcR) from Streptococcus pneumoniae serotype 2 (strain D39 / NCTC 7466).